A 1105-amino-acid polypeptide reads, in one-letter code: MSSGGRGGKRRGAPPPGPSGAAAKRAHPGGTPQPPPPAATAAAPVAEEEDMMDEDVFLDETILAEDEEALLLLDRDEALASRLSRWRRPALPADLASGCSRNVAFQQLEIDYVIGESHKVLLPNSSGPAAILRIFGVTREGHSVCCQVHGFEPYFYISCPMGMGPDDISRFHQTLEGRMKDSNRNSNVPRFVKRIELVQKQTIMHYQPQQSQPFLKIVVALPTMVASCRGILERGITIEGLGSKSFLTYESNILFALRFMIDCNIVGGNWIEVPAGKYMKAARIMSYCQLELDCLYSDLVSHAAEGEHSKMAPFRILSFDIECAGRKGHFPEPTHDPVIQIANLVTLQGEGQPFVRNVMTLKSCSPIVGVDVMSFDTERDVLLAWRDFIREVDPDIIIGYNICKFDLPYLIERAEVLKIVEFPILGRIRNSRVRVRDTTFSSRQYGMRESKDVAVEGRVQFDLLQAMQRDYKLSSYSLNSVSAHFLGEQKEDVHHSIISDLQNGNSETRRRLAVYCLKDAYLPQRLLDKLMYIYNYVEMARVTGVPISFLLSRGQSIKVLSQLLRKAKQKNLVIPNIKGQASGQDTFEGATVLEARAGFYEKPIATLDFASLYPSIMMAYNLCYCTLVPPEDARKLNLPPESVNKTPSGETFVKPDVQKGILPEILEELLAARKRAKADLKEAKDPFERAVLDGRQLALKISANSVYGFTGATVGQLPCLEISSSVTSYGRQMIEHTKKLVEDKFTTLGGYEHNAEVIYGDTDSVMVQFGVSTVEDAMKLGREAADYISGTFIKPIKLEFEKIYFPYLLISKKRYAGLYWTNPEKFDKMDTKGIETVRRDNCLLVKNLVTECLHKILVDRDVPGAVQYVKNTISDLLMNRVDLSLLVITKGLTKTGEDYAVKAAHVELAERMRKRDAATAPTVGDRVPYVIIKAAKGAKAYERSEDPIYVLDNNIPIDPQYYLENQISKPLLRIFEPILKNASRELLHGSHTRAVSISTPSNSGIMKFAKKQLTCLGCKAVISGSNQTLCFHCKGREAELYCKTVGNVSELEMLFGRLWTQCQECQGSLHQDVLCTSRDCPIFYRRRKAQKDMAEARVQLQRWDF.

The disordered stretch occupies residues 1 to 46 (MSSGGRGGKRRGAPPPGPSGAAAKRAHPGGTPQPPPPAATAAAPVA). Positions 1015, 1018, 1030, and 1033 each coordinate Zn(2+). Residues 1015 to 1033 (CLGCKAVISGSNQTLCFHC) form a CysA-type zinc finger. [4Fe-4S] cluster-binding residues include Cys-1062, Cys-1065, Cys-1075, and Cys-1080. A CysB motif motif is present at residues 1062 to 1080 (CQECQGSLHQDVLCTSRDC).

Belongs to the DNA polymerase type-B family. In terms of assembly, heterodimer with subunits of 125 kDa and 50 kDa. The 125 kDa subunit contains the polymerase active site and most likely the active site for the 3'-5' exonuclease activity. It depends on [4Fe-4S] cluster as a cofactor.

The protein resides in the nucleus. It carries out the reaction DNA(n) + a 2'-deoxyribonucleoside 5'-triphosphate = DNA(n+1) + diphosphate. Its function is as follows. This polymerase possesses two enzymatic activities: DNA synthesis (polymerase) and an exonucleolytic activity that degrades single-stranded DNA in the 3'- to 5'-direction. The chain is DNA polymerase delta catalytic subunit (POLD1) from Oryza sativa subsp. japonica (Rice).